A 167-amino-acid chain; its full sequence is Biogenesis of lysosome-related organelles complex 1 subunit 6 (167 aa).

Over residues 1-11 the composition is skewed to polar residues; it reads MLKSSNINSVL. The disordered stretch occupies residues 1 to 38; it reads MLKSSNINSVLNELPNDPARDSTAQSSHNGKPKQDAET. Residues 102–160 are a coiled coil; it reads ARLNDMMSDVKRYKDKLTKIKKEMQGVYQRTKELKKRAANVAACKQRDYQRKLERLQHE.

It belongs to the BLOC1S6 family. In terms of assembly, component of the biogenesis of lysosome-related organelles complex-1 (BLOC-1) composed of Blos1, Blos2, Blos3, Blos4, Dysb, Muted, Pldn and Snapin. Interacts with Blos1, Blos4 and Dysb.

Its subcellular location is the synapse. The protein resides in the cytoplasm. It is found in the cytoskeleton. It localises to the myofibril. The protein localises to the sarcomere. Its subcellular location is the z line. Component of the biogenesis of lysosome-related organelles complex-1 (BLOC-1) involved in pigment granule biogenesis and membrane trafficking in synapses. In response to high synaptic activity at neuromuscular junctions, plays a key role in promoting efficient synaptic vesicle recycling and re-formation through early endosomes. This is Biogenesis of lysosome-related organelles complex 1 subunit 6 from Drosophila melanogaster (Fruit fly).